Reading from the N-terminus, the 177-residue chain is Adenine phosphoribosyltransferase (177 aa).

This sequence belongs to the purine/pyrimidine phosphoribosyltransferase family. As to quaternary structure, homodimer.

It localises to the cytoplasm. The catalysed reaction is AMP + diphosphate = 5-phospho-alpha-D-ribose 1-diphosphate + adenine. It participates in purine metabolism; AMP biosynthesis via salvage pathway; AMP from adenine: step 1/1. Functionally, catalyzes a salvage reaction resulting in the formation of AMP, that is energically less costly than de novo synthesis. In Anaeromyxobacter sp. (strain Fw109-5), this protein is Adenine phosphoribosyltransferase.